Reading from the N-terminus, the 207-residue chain is SPRY domain-containing protein 4 (207 aa).

Residues 12–207 enclose the B30.2/SPRY domain; it reads YRWGTKRWGV…HSGLEVPKGL (196 aa). Residues Lys-53 and Lys-130 each carry the N6-acetyllysine modification. An N6-succinyllysine modification is found at Lys-139.

The chain is SPRY domain-containing protein 4 (Spryd4) from Rattus norvegicus (Rat).